Consider the following 338-residue polypeptide: NADPH dehydrogenase (338 aa).

Position 28 (tyrosine 28) interacts with substrate. Residues alanine 60 and glutamine 102 each contribute to the FMN site. 164 to 167 (HAAH) is a substrate binding site. Residues arginine 215 and 307-308 (AR) each bind FMN.

Belongs to the NADH:flavin oxidoreductase/NADH oxidase family. NamA subfamily. In terms of assembly, homotetramer. It depends on FMN as a cofactor.

It catalyses the reaction A + NADPH + H(+) = AH2 + NADP(+). Catalyzes the reduction of the double bond of an array of alpha,beta-unsaturated aldehydes and ketones. It also reduces the nitro group of nitroester and nitroaromatic compounds. It could have a role in detoxification processes. This is NADPH dehydrogenase from Bacillus velezensis (strain DSM 23117 / BGSC 10A6 / LMG 26770 / FZB42) (Bacillus amyloliquefaciens subsp. plantarum).